A 622-amino-acid polypeptide reads, in one-letter code: 1,4-alpha-glucan branching enzyme GlgB (622 aa).

The active-site Nucleophile is Asp-300. Glu-351 (proton donor) is an active-site residue.

The protein belongs to the glycosyl hydrolase 13 family. GlgB subfamily. Monomer.

The enzyme catalyses Transfers a segment of a (1-&gt;4)-alpha-D-glucan chain to a primary hydroxy group in a similar glucan chain.. The protein operates within glycan biosynthesis; glycogen biosynthesis. Functionally, catalyzes the formation of the alpha-1,6-glucosidic linkages in glycogen by scission of a 1,4-alpha-linked oligosaccharide from growing alpha-1,4-glucan chains and the subsequent attachment of the oligosaccharide to the alpha-1,6 position. This chain is 1,4-alpha-glucan branching enzyme GlgB, found in Streptococcus agalactiae serotype V (strain ATCC BAA-611 / 2603 V/R).